We begin with the raw amino-acid sequence, 600 residues long: NADH-quinone oxidoreductase subunit C/D (600 aa).

The interval 1-190 (MVNNMTDLTA…DPFELTKAKQ (190 aa)) is NADH dehydrogenase I subunit C. The segment at 214–600 (DFMFLNLGPN…IDFVMSDVDR (387 aa)) is NADH dehydrogenase I subunit D.

The protein in the N-terminal section; belongs to the complex I 30 kDa subunit family. It in the C-terminal section; belongs to the complex I 49 kDa subunit family. NDH-1 is composed of 13 different subunits. Subunits NuoB, CD, E, F, and G constitute the peripheral sector of the complex.

The protein resides in the cell inner membrane. It catalyses the reaction a quinone + NADH + 5 H(+)(in) = a quinol + NAD(+) + 4 H(+)(out). In terms of biological role, NDH-1 shuttles electrons from NADH, via FMN and iron-sulfur (Fe-S) centers, to quinones in the respiratory chain. The immediate electron acceptor for the enzyme in this species is believed to be ubiquinone. Couples the redox reaction to proton translocation (for every two electrons transferred, four hydrogen ions are translocated across the cytoplasmic membrane), and thus conserves the redox energy in a proton gradient. The sequence is that of NADH-quinone oxidoreductase subunit C/D from Salmonella arizonae (strain ATCC BAA-731 / CDC346-86 / RSK2980).